The following is a 755-amino-acid chain: Sentrin-specific protease 5 (755 aa).

Residues 268-321 (VQKVTGDHQETRRENGEGGSCSPFPSPEPKDPSCRHQPYFPDMDSSAVVKGTNS) form a disordered region. Residues 272 to 283 (TGDHQETRRENG) are compositionally biased toward basic and acidic residues. A protease region spans residues 567–724 (HMLDMDDLAT…VFVLQYCKCL (158 aa)). Residues His646, Asp663, and Cys713 contribute to the active site.

This sequence belongs to the peptidase C48 family. As to quaternary structure, interacts with CCAR2.

The protein resides in the nucleus. The protein localises to the nucleolus. Protease that catalyzes two essential functions in the SUMO pathway: processing of full-length SUMO3 to its mature form and deconjugation of SUMO2 and SUMO3 from targeted proteins. Has weak proteolytic activity against full-length SUMO1 or SUMO1 conjugates. Required for cell division. The protein is Sentrin-specific protease 5 (SENP5) of Homo sapiens (Human).